We begin with the raw amino-acid sequence, 191 residues long: MIKCNNKTFNNLLKLTILVNLLISCGLTGATKIRLERSAKDITDEIDAIKKDAALKGVNFDAFKDKKTGSGVSENPFILEAKVRATTVAEKFVIAIEEEATKLKETGSSGEFSAMYDLMFEVSKPLQKLGIQEMTKTVSDAAEENPPTTAQGVLEIAKKMREKLQRVHTKNYCTLKKKENSTFTDEKCKNN.

The N-terminal stretch at 1–29 is a signal peptide; that stretch reads MIKCNNKTFNNLLKLTILVNLLISCGLTG.

It belongs to the decorin-binding protein family.

In terms of biological role, binds to decorin which may mediate the adherence of B.burgdorferi to collagen fibers in skin and other tissues. The chain is Decorin-binding protein A (dbpA) from Borreliella burgdorferi (strain ATCC 35210 / DSM 4680 / CIP 102532 / B31) (Borrelia burgdorferi).